The following is a 761-amino-acid chain: MKGGGLHCRCSKCFAAPPRRRIKRRPRVLTLLSLPEDVLLYVLECLPAVDILSMREVHPHLRSLVDSHSSVWARASFQDVWPSSENLNLFERAAECGNFEACVKLGIAYLYNEGLSVSDDGRAEVNGLKASRFFSLTERLNAGADPFVWLFIRPPWSSSGSCCKAVVFDSLNEECGTVTSGEGATGALKGSIQYCLAKVLSLFEDDDKKREALGMLESSASNGCLHSAYLLWETKQKAALSDPGRYLQSFRQLRDYAARGCWDAQISLAKACGHKNPLNQEQRSAGELVNQVFQSSLPINKSSIFTTQKGMNDTMRYILIDWLVEVATMKDFSSLCLHMTVGLVDRYLKLRSVPRAKLQLVGIACMVICTRFISKEILTIREAVWLTDNTYKYEDLVRMMGEIISALEGKIRMPTVVDYKDVLSHLIPLDRNTLHLCSYISELSLLYTELSMYSPAQLAAGALLLARILHRQARPWPAQLAETTGFTLEHLTPCVVLLHKKCFHDDAPRDYRQVSLTAVKQRFQDDLYDQISKEKVMDHTHLCELLGVPCHDSESPATCPNAADFHQFLCSPSGNKTKRRREESIQEDRGSFVTTPTAELSNQEEDLLGDFLDWSLETSCSGYEGDRESEGEREGEVTAPSGVLDLSLLLTEHPQCQDSTTDDDSITLHPIPLLSKAENGTDSIEGCVEKSSGYSSVSSGGSPTSSSSPGLPFTPTPGLNHSKLTPIPFPQPCSPLLKASRRQVKRKNQAQHSEDNLSDEL.

The Nuclear localization signal 1 signature appears at 19–27 (RRRIKRRPR). The 48-residue stretch at 28–75 (VLTLLSLPEDVLLYVLECLPAVDILSMREVHPHLRSLVDSHSSVWARA) folds into the F-box domain. Residues 300–411 (NKSSIFTTQK…EIISALEGKI (112 aa)) form the Cyclin N-terminal domain. 2 short sequence motifs (d box) span residues 316-319 (RYIL) and 355-358 (RAKL). Disordered stretches follow at residues 575 to 594 (NKTK…SFVT) and 677 to 761 (AENG…SDEL). Residues 580–590 (RREESIQEDRG) show a composition bias toward basic and acidic residues. The interval 589-745 (RGSFVTTPTA…LLKASRRQVK (157 aa)) is PEST. Residues 691–718 (SSGYSSVSSGGSPTSSSSPGLPFTPTPG) show a composition bias toward low complexity. Residues 739–749 (ASRRQVKRKNQ) are compositionally biased toward basic residues.

The protein belongs to the cyclin family. Cyclin AB subfamily. In terms of assembly, component of the SCF(CCNF) complex.

It localises to the nucleus. The protein localises to the cytoplasm. Its subcellular location is the perinuclear region. It is found in the cytoskeleton. The protein resides in the microtubule organizing center. It localises to the centrosome. The protein localises to the centriole. Its function is as follows. Substrate recognition component of the SCF(CCNF) E3 ubiquitin-protein ligase complex which mediates the ubiquitination and subsequent proteasomal degradation of target proteins. The SCF(CCNF) E3 ubiquitin-protein ligase complex is an integral component of the ubiquitin proteasome system (UPS) and links proteasome degradation to the cell cycle. Mediates the substrate recognition and the proteasomal degradation of various target proteins during G2 phase involved in the regulation of cell cycle progression and in the maintenance of genome stability. The protein is Cyclin-F (ccnf) of Xenopus laevis (African clawed frog).